The chain runs to 151 residues: Lipoprotein signal peptidase (151 aa).

Transmembrane regions (helical) follow at residues 3–23 (LYII…GWIV), 59–79 (WFFY…FYTS), and 85–107 (LYRI…RLHL). Catalysis depends on residues D112 and D128. A helical transmembrane segment spans residues 123 to 143 (IFNVADTALTCGVICVFIAIL).

Belongs to the peptidase A8 family.

It localises to the cell membrane. The catalysed reaction is Release of signal peptides from bacterial membrane prolipoproteins. Hydrolyzes -Xaa-Yaa-Zaa-|-(S,diacylglyceryl)Cys-, in which Xaa is hydrophobic (preferably Leu), and Yaa (Ala or Ser) and Zaa (Gly or Ala) have small, neutral side chains.. It functions in the pathway protein modification; lipoprotein biosynthesis (signal peptide cleavage). In terms of biological role, this protein specifically catalyzes the removal of signal peptides from prolipoproteins. The sequence is that of Lipoprotein signal peptidase from Latilactobacillus sakei subsp. sakei (strain 23K) (Lactobacillus sakei subsp. sakei).